Reading from the N-terminus, the 359-residue chain is uncharacterized protein (359 aa).

The N-terminal stretch at 1–15 is a signal peptide; that stretch reads MSIVLAIDTATAAVT. One can recognise an N-acetyltransferase domain in the interval 212–359; the sequence is IVIGTLTPAD…DAYLMRREAQ (148 aa).

This is an uncharacterized protein from Mycobacterium leprae (strain TN).